The following is a 301-amino-acid chain: Heterogeneous nuclear ribonucleoprotein D-like (301 aa).

Residues 1–29 (MEDATEMSGGAEEFAEGSKINASKNQQDD) are disordered. 2 RRM domains span residues 30 to 112 (GKMF…KGKE) and 115 to 194 (KKVF…QPKE). Disordered stretches follow at residues 194–230 (EVYR…NWNQ) and 269–301 (GYGP…YQPY). The span at 212–224 (GGRGGGRGRGRGQ) shows a compositional bias: gly residues.

The protein resides in the nucleus. The protein localises to the cytoplasm. Acts as a transcriptional regulator. Binds DNA and RNA. This is Heterogeneous nuclear ribonucleoprotein D-like (HNRNPDL) from Gallus gallus (Chicken).